The primary structure comprises 457 residues: Cysteine--tRNA ligase (457 aa).

Zn(2+) is bound at residue C30. The 'HIGH' region signature appears at 32–42 (PTVYDRAHLGN). Zn(2+) is bound by residues C213, H238, and E242. Residues 271 to 275 (KMSKS) carry the 'KMSKS' region motif. K274 is an ATP binding site.

Belongs to the class-I aminoacyl-tRNA synthetase family. As to quaternary structure, monomer. It depends on Zn(2+) as a cofactor.

It is found in the cytoplasm. The enzyme catalyses tRNA(Cys) + L-cysteine + ATP = L-cysteinyl-tRNA(Cys) + AMP + diphosphate. This chain is Cysteine--tRNA ligase, found in Ruegeria sp. (strain TM1040) (Silicibacter sp.).